The chain runs to 357 residues: Dual-specificity RNA methyltransferase RlmN (357 aa).

The Proton acceptor role is filled by E89. Residues 109-340 (EGEKYTVCVS…CTIRESKALD (232 aa)) enclose the Radical SAM core domain. C116 and C345 form a disulfide bridge. The [4Fe-4S] cluster site is built by C123, C127, and C130. S-adenosyl-L-methionine is bound by residues 173–174 (GE), S203, 226–228 (SLH), and N302. The active-site S-methylcysteine intermediate is C345.

The protein belongs to the radical SAM superfamily. RlmN family. [4Fe-4S] cluster serves as cofactor.

The protein resides in the cytoplasm. It catalyses the reaction adenosine(2503) in 23S rRNA + 2 reduced [2Fe-2S]-[ferredoxin] + 2 S-adenosyl-L-methionine = 2-methyladenosine(2503) in 23S rRNA + 5'-deoxyadenosine + L-methionine + 2 oxidized [2Fe-2S]-[ferredoxin] + S-adenosyl-L-homocysteine. The enzyme catalyses adenosine(37) in tRNA + 2 reduced [2Fe-2S]-[ferredoxin] + 2 S-adenosyl-L-methionine = 2-methyladenosine(37) in tRNA + 5'-deoxyadenosine + L-methionine + 2 oxidized [2Fe-2S]-[ferredoxin] + S-adenosyl-L-homocysteine. Its function is as follows. Specifically methylates position 2 of adenine 2503 in 23S rRNA and position 2 of adenine 37 in tRNAs. m2A2503 modification seems to play a crucial role in the proofreading step occurring at the peptidyl transferase center and thus would serve to optimize ribosomal fidelity. The protein is Dual-specificity RNA methyltransferase RlmN of Helicobacter pylori (strain G27).